A 348-amino-acid chain; its full sequence is Probable dual-specificity RNA methyltransferase RlmN (348 aa).

The active-site Proton acceptor is the E89. Residues 95 to 330 (ERDHYTLCVS…NFVRFSKGVE (236 aa)) enclose the Radical SAM core domain. A disulfide bridge connects residues C102 and C335. [4Fe-4S] cluster-binding residues include C109, C113, and C116. S-adenosyl-L-methionine contacts are provided by residues 157-158 (GE), S189, 214-216 (SLN), and N292. The active-site S-methylcysteine intermediate is C335.

It belongs to the radical SAM superfamily. RlmN family. [4Fe-4S] cluster serves as cofactor.

The protein localises to the cytoplasm. The catalysed reaction is adenosine(2503) in 23S rRNA + 2 reduced [2Fe-2S]-[ferredoxin] + 2 S-adenosyl-L-methionine = 2-methyladenosine(2503) in 23S rRNA + 5'-deoxyadenosine + L-methionine + 2 oxidized [2Fe-2S]-[ferredoxin] + S-adenosyl-L-homocysteine. It catalyses the reaction adenosine(37) in tRNA + 2 reduced [2Fe-2S]-[ferredoxin] + 2 S-adenosyl-L-methionine = 2-methyladenosine(37) in tRNA + 5'-deoxyadenosine + L-methionine + 2 oxidized [2Fe-2S]-[ferredoxin] + S-adenosyl-L-homocysteine. Functionally, specifically methylates position 2 of adenine 2503 in 23S rRNA and position 2 of adenine 37 in tRNAs. This Aquifex aeolicus (strain VF5) protein is Probable dual-specificity RNA methyltransferase RlmN.